The sequence spans 96 residues: Co-chaperonin GroES (96 aa).

The protein belongs to the GroES chaperonin family. As to quaternary structure, heptamer of 7 subunits arranged in a ring. Interacts with the chaperonin GroEL.

It is found in the cytoplasm. In terms of biological role, together with the chaperonin GroEL, plays an essential role in assisting protein folding. The GroEL-GroES system forms a nano-cage that allows encapsulation of the non-native substrate proteins and provides a physical environment optimized to promote and accelerate protein folding. GroES binds to the apical surface of the GroEL ring, thereby capping the opening of the GroEL channel. The chain is Co-chaperonin GroES from Albidiferax ferrireducens (strain ATCC BAA-621 / DSM 15236 / T118) (Rhodoferax ferrireducens).